The chain runs to 122 residues: Large ribosomal subunit protein uL14 (122 aa).

The protein belongs to the universal ribosomal protein uL14 family. Part of the 50S ribosomal subunit. Forms a cluster with proteins L3 and L19. In the 70S ribosome, L14 and L19 interact and together make contacts with the 16S rRNA in bridges B5 and B8.

Binds to 23S rRNA. Forms part of two intersubunit bridges in the 70S ribosome. This Limosilactobacillus reuteri (strain DSM 20016) (Lactobacillus reuteri) protein is Large ribosomal subunit protein uL14.